The sequence spans 436 residues: 3-ketoacyl-CoA thiolase (436 aa).

The active-site Acyl-thioester intermediate is C99. Active-site proton acceptor residues include H392 and C422.

This sequence belongs to the thiolase-like superfamily. Thiolase family. In terms of assembly, heterotetramer of two alpha chains (FadJ) and two beta chains (FadI).

Its subcellular location is the cytoplasm. The catalysed reaction is an acyl-CoA + acetyl-CoA = a 3-oxoacyl-CoA + CoA. The protein operates within lipid metabolism; fatty acid beta-oxidation. In terms of biological role, catalyzes the final step of fatty acid oxidation in which acetyl-CoA is released and the CoA ester of a fatty acid two carbons shorter is formed. The protein is 3-ketoacyl-CoA thiolase of Escherichia fergusonii (strain ATCC 35469 / DSM 13698 / CCUG 18766 / IAM 14443 / JCM 21226 / LMG 7866 / NBRC 102419 / NCTC 12128 / CDC 0568-73).